Consider the following 212-residue polypeptide: 2,3-bisphosphoglycerate-dependent phosphoglycerate mutase (212 aa).

Substrate contacts are provided by residues 9-16 (RHGQSEWN), 22-23 (TG), R61, 88-91 (ERDY), K99, 115-116 (RR), and 159-160 (GN). The Tele-phosphohistidine intermediate role is filled by H10. The active-site Proton donor/acceptor is the E88.

This sequence belongs to the phosphoglycerate mutase family. BPG-dependent PGAM subfamily. In terms of assembly, homodimer.

The enzyme catalyses (2R)-2-phosphoglycerate = (2R)-3-phosphoglycerate. It functions in the pathway carbohydrate degradation; glycolysis; pyruvate from D-glyceraldehyde 3-phosphate: step 3/5. Catalyzes the interconversion of 2-phosphoglycerate and 3-phosphoglycerate. The protein is 2,3-bisphosphoglycerate-dependent phosphoglycerate mutase of Methylorubrum extorquens (strain CM4 / NCIMB 13688) (Methylobacterium extorquens).